Consider the following 860-residue polypeptide: MQEQYRPEEIESKVQQHWDEKRTFEVTEDESKEKYYCLSMLPYPSGRLHMGHVRNYTIGDVIARYQRMLGKNVLQPIGWDAFGLPAEGAAVKNNTAPAPWTYDNIAYMKNQLKMLGFGYDWSRELATCTPEYYRWEQKFFTELYKKGLVYKKTSAVNWCPNDQTVLANEQVIDGCCWRCDTKVERKEIPQWFIKITAYADELLNDLDKLDHWPDTVKTMQRNWIGRSEGVEITFDVNGYDNTLTVYTTRPDTFMGATYLAVAAGHPLAQKAAANNPELAAFIDECRNTKVAEADMATMEKKGVDTGFKAIHPLTGEAIPVWAANFVLMEYGTGAVMAVPGHDQRDYEFATKYGLTIKPVILAADGSEPDLSEQALTEKGVLFNSGEFNGLGFEDAFNAIADKLAAKGVGERKVNYRLRDWGVSRQRYWGAPIPMVTLEDGTVLPTPEDQLPVILPEDVVMDGITSPIKADPEWAKTTVNGQPALRETDTFDTFMESSWYYARYTCPQYNEGMLDPEAANYWLPVDIYIGGIEHAIMHLLYFRFFHKLMRDAGMVNSDEPAKQLLCQGMVLADAFYYVGENGERNWVSPVDAIVERDEKGRIVKAKDAAGHELVYTGMSKMSKSKNNGIDPQVMVERYGADTVRLFMMFASPADMTLEWQESGVEGANRFLKRVWKLVYEHTAKGEVAALNVDALSEDQKALRRDVHKTIAKVTDDIGRRQTFNTAIAAIMELMNKLAKAPQEGEQDRALMQEALLAVVRMLNPFTPHACFTLWEALKGEGDIDNAPWPVADDKAMVEDSTLVVVQVNGKVRGKITVPVNATEEQVRERAGQEHLVAKYLDGVTVRKVIYVPGKLLNLVVG.

The short motif at 42–52 (PYPSGRLHMGH) is the 'HIGH' region element. The short motif at 619–623 (KMSKS) is the 'KMSKS' region element. K622 serves as a coordination point for ATP.

Belongs to the class-I aminoacyl-tRNA synthetase family.

It localises to the cytoplasm. It carries out the reaction tRNA(Leu) + L-leucine + ATP = L-leucyl-tRNA(Leu) + AMP + diphosphate. In Citrobacter koseri (strain ATCC BAA-895 / CDC 4225-83 / SGSC4696), this protein is Leucine--tRNA ligase.